The sequence spans 360 residues: Nucleoporin SEH1 (360 aa).

6 WD repeats span residues 10 to 49 (DHKD…EWHC), 55 to 96 (THSG…SNDK), 111 to 152 (DSRT…NLSQ), 160 to 210 (SCKL…RKYA), 217 to 258 (TVTD…KELT), and 276 to 315 (NHNS…NWKC). K12 is covalently cross-linked (Glycyl lysine isopeptide (Lys-Gly) (interchain with G-Cter in SUMO2)). Residue S190 is modified to Phosphoserine. Residues 324 to 342 (SPVNGSSQQGNSNPSVGSN) are compositionally biased toward low complexity. Residues 324–360 (SPVNGSSQQGNSNPSVGSNIPSLQNSLNGSSAGRKHS) form a disordered region. The span at 343–354 (IPSLQNSLNGSS) shows a compositional bias: polar residues.

The protein belongs to the WD repeat SEC13 family. Component of the Nup107-160 subcomplex of the nuclear pore complex (NPC). The Nup107-160 subcomplex includes NUP160, NUP133, NUP107, NUP98, NUP85, NUP43, NUP37, SEH1 and SEC13. The SEH1 subunit appears to be only weakly associated with the Nup107-160 subcomplex. Component of the GATOR2 subcomplex, composed of MIOS, SEC13, SEH1L, WDR24 and WDR59. The GATOR2 complex interacts with CASTOR1 and CASTOR2; the interaction is negatively regulated by arginine. The GATOR2 complex interacts with SESN1, SESN2 and SESN3; the interaction is negatively regulated by amino acids. SESN1, SESN2 and SESN3 convey leucine availability via direct interaction with SEH1L and WDR24.

It is found in the chromosome. Its subcellular location is the centromere. It localises to the kinetochore. The protein localises to the nucleus. The protein resides in the nuclear pore complex. It is found in the lysosome membrane. The GATOR2 complex is negatively regulated by the upstream amino acid sensors CASTOR1 and SESN2, which sequester the GATOR2 complex in absence of amino acids. In the presence of abundant amino acids, GATOR2 is released from CASTOR1 and SESN2 and activated. In terms of biological role, component of the Nup107-160 subcomplex of the nuclear pore complex (NPC). The Nup107-160 subcomplex is required for the assembly of a functional NPC. The Nup107-160 subcomplex is also required for normal kinetochore microtubule attachment, mitotic progression and chromosome segregation. This subunit plays a role in recruitment of the Nup107-160 subcomplex to the kinetochore. Its function is as follows. As a component of the GATOR2 complex, functions as an activator of the amino acid-sensing branch of the mTORC1 signaling pathway. The GATOR2 complex indirectly activates mTORC1 through the inhibition of the GATOR1 subcomplex. GATOR2 probably acts as an E3 ubiquitin-protein ligase toward GATOR1. In the presence of abundant amino acids, the GATOR2 complex mediates ubiquitination of the NPRL2 core component of the GATOR1 complex, leading to GATOR1 inactivation. In the absence of amino acids, GATOR2 is inhibited, activating the GATOR1 complex. Within the GATOR2 complex, SEC13 and SEH1L are required to stabilize the complex. The protein is Nucleoporin SEH1 (SEH1L) of Bos taurus (Bovine).